Reading from the N-terminus, the 339-residue chain is Trace amine-associated receptor 2 (339 aa).

The Extracellular portion of the chain corresponds to 1–36; that stretch reads MASFEAQQETFDCSEYGNGSCPENERSLGVRAAMYS. N-linked (GlcNAc...) asparagine glycosylation occurs at N18. 2 cysteine pairs are disulfide-bonded: C21–C185 and C104–C189. Residues 37–57 traverse the membrane as a helical segment; it reads LMACAIFITIFGNLAMIISIS. Over 58–67 the chain is Cytoplasmic; it reads YFKQLHTPTN. The chain crosses the membrane as a helical span at residues 68–88; sequence LLILSMAVTDFLLGFTIMPYS. The Extracellular segment spans residues 89-106; the sequence is MVRSVENCWYFGLTFCKI. A helical transmembrane segment spans residues 107 to 127; it reads HYSFDLMLSITSIFHLCSVAV. Topologically, residues 128–150 are cytoplasmic; that stretch reads DRFYAICHPLHYCTKMTIPVVRR. Residues 151–171 form a helical membrane-spanning segment; it reads LLLVCWSVPGAFAFGVVFSEA. The Extracellular segment spans residues 172-195; sequence YADGIEGYDILVACSSSCPVMFNK. Residues 196–216 form a helical membrane-spanning segment; the sequence is LWGTTLFVAGFFTPSSMMVGI. The Cytoplasmic segment spans residues 217–251; that stretch reads YGKIFAVSKKHARVIDNLPENQNNQMRKDKKAAKT. The chain crosses the membrane as a helical span at residues 252–272; the sequence is LGIVMGVFLLCWFPCFFTILL. At 273–287 the chain is on the extracellular side; the sequence is DPFLNFSTPAVLFDA. A glycan (N-linked (GlcNAc...) asparagine) is linked at N277. The helical transmembrane segment at 288-310 threads the bilayer; sequence LTWFGYFNSTCNPLIYGFFYPWF. At 311 to 339 the chain is on the cytoplasmic side; the sequence is RRALKYILLGKIFSSHFHNTNLFTQKETE.

The protein belongs to the G-protein coupled receptor 1 family. Mainly expressed in neurons of the olfactory epithelium. Also present in the limbic brain areas receiving projection from the olfactory system and several brain regions, including the hippocampus, cerebellum, cortex, raphe nuclei, hypothalamus and habenula.

The protein localises to the cell membrane. Orphan olfactory receptor specific for trace amines. Trace amine compounds are enriched in animal body fluids and act on trace amine-associated receptors (TAARs) to elicit both intraspecific and interspecific innate behaviors. Ligand-binding causes a conformation change that triggers signaling via the G(s)-class of G-proteins which activate adenylate cyclase. May also be required to provide olfactory input into limbic brain areas to regulate emotional behaviors likely via modulation of the dopamine system. The protein is Trace amine-associated receptor 2 of Mus musculus (Mouse).